Reading from the N-terminus, the 541-residue chain is Glucose-6-phosphate isomerase (541 aa).

The Proton donor role is filled by Glu-346. Catalysis depends on residues His-377 and Lys-506.

The protein belongs to the GPI family.

Its subcellular location is the cytoplasm. The catalysed reaction is alpha-D-glucose 6-phosphate = beta-D-fructose 6-phosphate. It participates in carbohydrate biosynthesis; gluconeogenesis. It functions in the pathway carbohydrate degradation; glycolysis; D-glyceraldehyde 3-phosphate and glycerone phosphate from D-glucose: step 2/4. In terms of biological role, catalyzes the reversible isomerization of glucose-6-phosphate to fructose-6-phosphate. The sequence is that of Glucose-6-phosphate isomerase from Rhizobium rhizogenes (strain K84 / ATCC BAA-868) (Agrobacterium radiobacter).